Here is a 173-residue protein sequence, read N- to C-terminus: Shikimate kinase (173 aa).

Residue 14–19 (GAGKST) participates in ATP binding. A Mg(2+)-binding site is contributed by S18. The substrate site is built by D36, R60, and G82. Residue R120 coordinates ATP. R139 provides a ligand contact to substrate. Q156 is a binding site for ATP.

Belongs to the shikimate kinase family. As to quaternary structure, monomer. Mg(2+) is required as a cofactor.

It localises to the cytoplasm. The catalysed reaction is shikimate + ATP = 3-phosphoshikimate + ADP + H(+). The protein operates within metabolic intermediate biosynthesis; chorismate biosynthesis; chorismate from D-erythrose 4-phosphate and phosphoenolpyruvate: step 5/7. In terms of biological role, catalyzes the specific phosphorylation of the 3-hydroxyl group of shikimic acid using ATP as a cosubstrate. This Actinobacillus pleuropneumoniae serotype 5b (strain L20) protein is Shikimate kinase.